The sequence spans 421 residues: Methionine aminopeptidase 2 (421 aa).

The interval 1–53 is disordered; that stretch reads MTDAEIENSPASDLKELNLENEGVEQQDQAKADESDPVESKKKKNKKKKKKKS. A compositionally biased stretch (basic and acidic residues) spans 28 to 40; sequence DQAKADESDPVES. Residue serine 35 is modified to Phosphoserine. Basic residues predominate over residues 41-53; it reads KKKKNKKKKKKKS. Histidine 174 lines the substrate pocket. A divalent metal cation is bound by residues aspartate 194, aspartate 205, and histidine 274. Histidine 282 contributes to the substrate binding site. Positions 307 and 402 each coordinate a divalent metal cation.

This sequence belongs to the peptidase M24A family. Methionine aminopeptidase eukaryotic type 2 subfamily. Co(2+) is required as a cofactor. The cofactor is Zn(2+). It depends on Mn(2+) as a cofactor. Requires Fe(2+) as cofactor.

Its subcellular location is the cytoplasm. The catalysed reaction is Release of N-terminal amino acids, preferentially methionine, from peptides and arylamides.. Its function is as follows. Cotranslationally removes the N-terminal methionine from nascent proteins. The N-terminal methionine is often cleaved when the second residue in the primary sequence is small and uncharged (Met-Ala-, Cys, Gly, Pro, Ser, Thr, or Val). The protein is Methionine aminopeptidase 2 of Saccharomyces cerevisiae (strain RM11-1a) (Baker's yeast).